We begin with the raw amino-acid sequence, 68 residues long: Guanine nucleotide-binding protein G(I)/G(S)/G(O) subunit gamma-5B (68 aa).

Residues 3 to 68 (GFSSVAATKK…FRPQKVCSFL (66 aa)) enclose the G protein gamma domain. The residue at position 65 (Cys-65) is a Cysteine methyl ester. A lipid anchor (S-geranylgeranyl cysteine) is attached at Cys-65. Residues 66–68 (SFL) constitute a propeptide, removed in mature form.

The protein belongs to the G protein gamma family. G proteins are composed of 3 units; alpha, beta and gamma.

The protein resides in the cell membrane. In terms of biological role, guanine nucleotide-binding proteins (G proteins) are involved as a modulator or transducer in various transmembrane signaling systems. The beta and gamma chains are required for the GTPase activity, for replacement of GDP by GTP, and for G protein-effector interaction. The chain is Guanine nucleotide-binding protein G(I)/G(S)/G(O) subunit gamma-5B from Homo sapiens (Human).